Here is a 264-residue protein sequence, read N- to C-terminus: Undecaprenyl-diphosphatase (264 aa).

The next 8 helical transmembrane spans lie at I7–S27, T45–Y65, I86–I106, L109–A129, I145–F165, V186–I206, L215–I235, and K244–I264.

The protein belongs to the UppP family.

Its subcellular location is the cell membrane. It carries out the reaction di-trans,octa-cis-undecaprenyl diphosphate + H2O = di-trans,octa-cis-undecaprenyl phosphate + phosphate + H(+). In terms of biological role, catalyzes the dephosphorylation of undecaprenyl diphosphate (UPP). Confers resistance to bacitracin. The sequence is that of Undecaprenyl-diphosphatase from Buchnera aphidicola subsp. Schizaphis graminum (strain Sg).